Consider the following 132-residue polypeptide: Large ribosomal subunit protein bL12 (132 aa).

Belongs to the bacterial ribosomal protein bL12 family. In terms of assembly, homodimer. Part of the ribosomal stalk of the 50S ribosomal subunit. Forms a multimeric L10(L12)X complex, where L10 forms an elongated spine to which 2 to 4 L12 dimers bind in a sequential fashion. Binds GTP-bound translation factors.

Forms part of the ribosomal stalk which helps the ribosome interact with GTP-bound translation factors. Is thus essential for accurate translation. The protein is Large ribosomal subunit protein bL12 of Chloroflexus aurantiacus (strain ATCC 29366 / DSM 635 / J-10-fl).